A 250-amino-acid chain; its full sequence is 4-hydroxy-tetrahydrodipicolinate reductase (250 aa).

Residues 9-14 (GATGKM), 79-81 (GTT), and 103-106 (SANM) each bind NAD(+). Catalysis depends on histidine 135, which acts as the Proton donor/acceptor. Histidine 136 contributes to the (S)-2,3,4,5-tetrahydrodipicolinate binding site. Lysine 139 acts as the Proton donor in catalysis. 145 to 146 (GT) is a binding site for (S)-2,3,4,5-tetrahydrodipicolinate.

It belongs to the DapB family.

Its subcellular location is the cytoplasm. The catalysed reaction is (S)-2,3,4,5-tetrahydrodipicolinate + NAD(+) + H2O = (2S,4S)-4-hydroxy-2,3,4,5-tetrahydrodipicolinate + NADH + H(+). It catalyses the reaction (S)-2,3,4,5-tetrahydrodipicolinate + NADP(+) + H2O = (2S,4S)-4-hydroxy-2,3,4,5-tetrahydrodipicolinate + NADPH + H(+). The protein operates within amino-acid biosynthesis; L-lysine biosynthesis via DAP pathway; (S)-tetrahydrodipicolinate from L-aspartate: step 4/4. In terms of biological role, catalyzes the conversion of 4-hydroxy-tetrahydrodipicolinate (HTPA) to tetrahydrodipicolinate. In Rickettsia bellii (strain OSU 85-389), this protein is 4-hydroxy-tetrahydrodipicolinate reductase.